Reading from the N-terminus, the 72-residue chain is SRY-related protein ADW5 (72 aa).

The segment at residues 1-69 (VKRPMNAFMV…KHMADYPDYK (69 aa)) is a DNA-binding region (HMG box).

It is found in the nucleus. The protein is SRY-related protein ADW5 of Alligator mississippiensis (American alligator).